The sequence spans 799 residues: Pentatricopeptide repeat-containing protein At2g26790, mitochondrial (799 aa).

The transit peptide at 1–27 (MRFSPTFFLLSQLRLTRRRAATSSRFY) directs the protein to the mitochondrion. PPR repeat units follow at residues 145-179 (LIRVSGALVKAYVSLGMFDEATDVLFQSKRLDCVV), 180-214 (DIKACNFLMNRMTEFGKIGMLMTLFKQLKQLGLCA), 215-250 (NEYTYAIVVKALCRKGNLEEAAMLLIENESVFGYKT), 251-278 (FINGLCVTGETEKAVALILELIDRKYLA), 282-316 (LRAVLGMVVRGFCNEMKMKAAESVIIEMEEIGFGL), 317-351 (DVYACLAVIDRYCKNMNLPEALGFLDKMLGKGLKV), 352-386 (NCVIVSLILQCYCKMDMCLEALEKFKEFRDMNIFL), 387-421 (DRVCYNVAFDALSKLGRVEEAFELLQEMKDRGIVP), 422-456 (DVINYTTLIDGYCLQGKVVDALDLIDEMIGNGMSP), 457-491 (DLITYNVLVSGLARNGHEEEVLEIYERMKAEGPKP), 492-522 (NAVTNSVIIEGLCFARKVKEAEDFFSSLEQK), 523-553 (CPENKASFVKGYCEAGLSKKAYKAFVRLEYP), 555-589 (RKSVYIKLFFSLCIEGYLEKAHDVLKKMSAYRVEP), 590-624 (GRSMCGKMIGAFCKLNNVREAQVLFDTMVERGLIP), 625-659 (DLFTYTIMIHTYCRLNELQKAESLFEDMKQRGIKP), 660-695 (DVVTYTVLLDRYLKLDPEHHETCSVQGEVGKRKASE), 708-742 (DVVCYTVLIDRQCKMNNLEQAAELFDRMIDSGLEP), and 743-777 (DMVAYTTLISSYFRKGYIDMAVTLVTELSKKYNIP).

The protein belongs to the PPR family. P subfamily.

Its subcellular location is the mitochondrion. The chain is Pentatricopeptide repeat-containing protein At2g26790, mitochondrial from Arabidopsis thaliana (Mouse-ear cress).